The following is a 264-amino-acid chain: V-type proton ATPase subunit D (264 aa).

A compositionally biased stretch (basic and acidic residues) spans 214–230; the sequence is RDNAETDAQMKAKKAEQ. The interval 214-264 is disordered; the sequence is RDNAETDAQMKAKKAEQQRLALADSENAEGEQTENTPADILAAEEDEDVIF. The span at 255–264 shows a compositional bias: acidic residues; sequence AAEEDEDVIF.

Belongs to the V-ATPase D subunit family. As to quaternary structure, V-ATPase is a heteromultimeric enzyme composed of a peripheral catalytic V1 complex (components A to H) attached to an integral membrane V0 proton pore complex (components: a, c, c', c'', d, e, f and VOA1).

It localises to the vacuole membrane. Functionally, subunit of the V1 complex of vacuolar(H+)-ATPase (V-ATPase), a multisubunit enzyme composed of a peripheral complex (V1) that hydrolyzes ATP and a membrane integral complex (V0) that translocates protons. V-ATPase is responsible for acidifying and maintaining the pH of intracellular compartments. The sequence is that of V-type proton ATPase subunit D (vma-8) from Neurospora crassa (strain ATCC 24698 / 74-OR23-1A / CBS 708.71 / DSM 1257 / FGSC 987).